Here is a 192-residue protein sequence, read N- to C-terminus: Protein ORF45 (192 aa).

Functionally, plays a role in the expression of ORF41, which itself is required for late gene expression. The polypeptide is Protein ORF45 (Autographa californica nuclear polyhedrosis virus (AcMNPV)).